Consider the following 257-residue polypeptide: Probable oxidoreductase yanE (257 aa).

The protein belongs to the oxidoreductase OpS7 family.

It participates in secondary metabolite biosynthesis; terpenoid biosynthesis. In terms of biological role, part of the gene cluster that mediates the biosynthesis of yanuthone D, a fungal isoprenoid epoxycyclohexenone that acts as an antibiotic against fungi and bacteria. The first step of the pathway is the synthesis of 6-methylsalicylic acid (6-MSA) by the polyketide synthase yanA. 6-MSA is then converted to m-cresol by the decarboxylase yanB. The cytochrome P450 monooxygenase yanC then catalyzes the oxidation of m-cresol to toluquinol. Epoxidation of toluquinol is then performed by the short chain dehydrogenase yanD, with the help of yanE, and a further prenylation by yanG leads to 7-deacetoxyyanuthone A. The next step is the hydroxylation of C-22 of 7-deacetoxyyanuthone A by the cytochrome P450 monooxygenase yanH to yield 22-deacetylyanuthone A. O-Mevalon transferase yanI then attaches mevalon to the hydroxyl group of 22-deacetylyanuthone A to produce yanuthone E. Finally, the FAD-dependent monooxygenase yanF oxidizes the hydroxyl group at C15 of yanuthone E to form yanuthone D. Furthermore, several branching points in the pathway lead to the production of yanuthones F and G from 7-deacetoxyyanuthone A; yanuthones H and I from 22-deacetylyanuthone A; and yanuthone J from yanuthone E. YanE is also involved in the synthesis of yanuthone X1 which does not have 6-methylsalicylic acid (6-MSA) as precursor. In Aspergillus niger (strain ATCC 1015 / CBS 113.46 / FGSC A1144 / LSHB Ac4 / NCTC 3858a / NRRL 328 / USDA 3528.7), this protein is Probable oxidoreductase yanE.